Here is a 105-residue protein sequence, read N- to C-terminus: Large ribosomal subunit protein uL24 (105 aa).

The protein belongs to the universal ribosomal protein uL24 family. As to quaternary structure, part of the 50S ribosomal subunit.

In terms of biological role, one of two assembly initiator proteins, it binds directly to the 5'-end of the 23S rRNA, where it nucleates assembly of the 50S subunit. One of the proteins that surrounds the polypeptide exit tunnel on the outside of the subunit. The chain is Large ribosomal subunit protein uL24 from Methylobacterium sp. (strain 4-46).